Here is a 333-residue protein sequence, read N- to C-terminus: Nucleoid-associated protein VV1_3120 (333 aa).

The protein belongs to the YejK family.

It localises to the cytoplasm. The protein localises to the nucleoid. This is Nucleoid-associated protein VV1_3120 from Vibrio vulnificus (strain CMCP6).